The primary structure comprises 115 residues: Parathyroid hormone (115 aa).

The N-terminal stretch at 1 to 25 (MMSASTMAKVMILMLAVCLLTQADG) is a signal peptide. Positions 26–31 (KPVKKR) are excised as a propeptide. The interval 51 to 69 (RMQWLRKKLQDVHNFVSLG) is important for receptor binding. The segment at 76 to 101 (EGSYQRPTKKEENVLVDGNSKSLGEG) is disordered.

The protein belongs to the parathyroid hormone family. In terms of assembly, interacts with PTH1R (via N-terminal extracellular domain). Hypothalamus and parathyroid gland.

The protein localises to the secreted. Parathyroid hormone elevates calcium level by dissolving the salts in bone and preventing their renal excretion. Acts by binding to its receptor, PTH1R, activating G protein-coupled receptor signaling. Stimulates [1-14C]-2-deoxy-D-glucose (2DG) transport and glycogen synthesis in osteoblastic cells. The sequence is that of Parathyroid hormone (Pth) from Rattus norvegicus (Rat).